Reading from the N-terminus, the 411-residue chain is CinA-like protein (411 aa).

This sequence belongs to the CinA family.

The polypeptide is CinA-like protein (Dictyoglomus thermophilum (strain ATCC 35947 / DSM 3960 / H-6-12)).